A 530-amino-acid chain; its full sequence is Chaperonin GroEL 2 (530 aa).

Residues 30 to 33, Lys51, 87 to 91, Gly415, 479 to 481, and Asp495 contribute to the ATP site; these read TLGP, DGTTT, and NAA.

Belongs to the chaperonin (HSP60) family. As to quaternary structure, forms a cylinder of 14 subunits composed of two heptameric rings stacked back-to-back. Interacts with the co-chaperonin GroES.

The protein resides in the cytoplasm. The catalysed reaction is ATP + H2O + a folded polypeptide = ADP + phosphate + an unfolded polypeptide.. Functionally, together with its co-chaperonin GroES, plays an essential role in assisting protein folding. The GroEL-GroES system forms a nano-cage that allows encapsulation of the non-native substrate proteins and provides a physical environment optimized to promote and accelerate protein folding. This Vibrio cholerae serotype O1 (strain ATCC 39315 / El Tor Inaba N16961) protein is Chaperonin GroEL 2.